Here is a 530-residue protein sequence, read N- to C-terminus: MPSNMKQFCKISVWLQQHDPDLLEIINNLCMLGNLSAAKYKHGVTFIYPKQAKIRDEIKKHAYSNDPSQAIKTLESLILPFYIPTPAEFTGEIGSYTGVKLEVEKTEANKVILKNGEAVLVPAADFKPFPDRRLAVWIMESGSMPLEGPPYKRKKEGGGNDPPVPKHISPYTPRTRIAIEVEKAFDDCMRQNWCSVNNPYLAKSVSLLSFLSLNHPTEFIKVLPLIDFDPLVTFYLLLEPYKTHGDDFLIPETILFGPTGWNGTDLYQSAMLEFKKFFTQITRQTFMDIADSATKEVDVPICYSDPETVHSYTNHVRTEILHHNAVNKVTTPNLVVQAYNELEQTNTIRHYGPIFPESTINALRFWKKLWQDEQRFVIHGLHRTLMDQPTYETSEFAEIVRNLRFSRPGNNYINELNITSPAMYGDKHTTGDIAPNDRFAMLVAFINSTDFLYTAIPEEKVGGNETQTSSLTDLVPTRLHSFLNHNLSKLKILNRAQQTVRNILSNDCLNQLKHYVKHTGKNEILKILQE.

The protein belongs to the asfivirus polyprotein pp62 family. In terms of assembly, monomer. Predominantly exists as a monomer, with very little dimers. Homodimerization seems to be linked to low pH. As to quaternary structure, homodimer; disulfide-linked. Homotrimer; disulfide-linked. Homohexamer. Monoubiquitinated in vitro by viral UBCv1. Post-translationally, specific enzymatic cleavages in vivo yield mature proteins.

The protein localises to the host cytoplasm. It is found in the host perinuclear region. Its subcellular location is the virion. Functionally, essential for the correct assembly and maturation of the core of the virion. Its function is as follows. Component of the core shell. Binds to phosphatidylserine, which may enable the core shell binding with the inner membrane. In terms of biological role, component of the core shell. Binds to phosphatidylserine and DNA, which may link the core shell to the inner membrane and to the viral nucleoid. Component of the core shell. The sequence is that of Polyprotein pp62 from Ornithodoros (relapsing fever ticks).